The sequence spans 117 residues: Conotoxin vil14.3 (117 aa).

The signal sequence occupies residues 1–22 (MGFRVLVLVVMATTSALPFTFS). Positions 23 to 90 (EEPGRSPFRP…FAELSVGQRR (68 aa)) are excised as a propeptide. A disordered region spans residues 53–79 (RADGQPPDMRQPEMRRPEMRRPEVRQP). A compositionally biased stretch (basic and acidic residues) spans 62-79 (RQPEMRRPEMRRPEVRQP). 2 cysteine pairs are disulfide-bonded: Cys-96/Cys-116 and Cys-100/Cys-112.

It belongs to the conotoxin R superfamily. In terms of tissue distribution, expressed by the venom duct.

Its subcellular location is the secreted. This is Conotoxin vil14.3 from Conus villepinii (Villepin's cone).